Here is a 306-residue protein sequence, read N- to C-terminus: Curved DNA-binding protein (306 aa).

Positions 5–69 (DYYAIMGVKP…QRRAEYDQMW (65 aa)) constitute a J domain.

It localises to the cytoplasm. It is found in the nucleoid. In terms of biological role, DNA-binding protein that preferentially recognizes a curved DNA sequence. It is probably a functional analog of DnaJ; displays overlapping activities with DnaJ, but functions under different conditions, probably acting as a molecular chaperone in an adaptive response to environmental stresses other than heat shock. Lacks autonomous chaperone activity; binds native substrates and targets them for recognition by DnaK. Its activity is inhibited by the binding of CbpM. In Escherichia coli O157:H7, this protein is Curved DNA-binding protein.